The primary structure comprises 372 residues: 4-hydroxy-3-methylbut-2-en-1-yl diphosphate synthase (flavodoxin) (372 aa).

[4Fe-4S] cluster contacts are provided by Cys-270, Cys-273, Cys-305, and Glu-312.

It belongs to the IspG family. [4Fe-4S] cluster serves as cofactor.

The catalysed reaction is (2E)-4-hydroxy-3-methylbut-2-enyl diphosphate + oxidized [flavodoxin] + H2O + 2 H(+) = 2-C-methyl-D-erythritol 2,4-cyclic diphosphate + reduced [flavodoxin]. Its pathway is isoprenoid biosynthesis; isopentenyl diphosphate biosynthesis via DXP pathway; isopentenyl diphosphate from 1-deoxy-D-xylulose 5-phosphate: step 5/6. Its function is as follows. Converts 2C-methyl-D-erythritol 2,4-cyclodiphosphate (ME-2,4cPP) into 1-hydroxy-2-methyl-2-(E)-butenyl 4-diphosphate. In Escherichia coli O8 (strain IAI1), this protein is 4-hydroxy-3-methylbut-2-en-1-yl diphosphate synthase (flavodoxin).